The sequence spans 299 residues: ATP phosphoribosyltransferase (299 aa).

The protein belongs to the ATP phosphoribosyltransferase family. Long subfamily. As to quaternary structure, equilibrium between an active dimeric form, an inactive hexameric form and higher aggregates. Interconversion between the various forms is largely reversible and is influenced by the natural substrates and inhibitors of the enzyme. Mg(2+) serves as cofactor.

It is found in the cytoplasm. The catalysed reaction is 1-(5-phospho-beta-D-ribosyl)-ATP + diphosphate = 5-phospho-alpha-D-ribose 1-diphosphate + ATP. Its pathway is amino-acid biosynthesis; L-histidine biosynthesis; L-histidine from 5-phospho-alpha-D-ribose 1-diphosphate: step 1/9. Feedback inhibited by histidine. Functionally, catalyzes the condensation of ATP and 5-phosphoribose 1-diphosphate to form N'-(5'-phosphoribosyl)-ATP (PR-ATP). Has a crucial role in the pathway because the rate of histidine biosynthesis seems to be controlled primarily by regulation of HisG enzymatic activity. This Sodalis glossinidius (strain morsitans) protein is ATP phosphoribosyltransferase.